The primary structure comprises 296 residues: MRINHPLTGSIVALITPMFDDGSIDFGVLKSLVAFHIDSGTKAIVSMGTTGESATLNQDEHIEVIRATIEFANSRIPIIASTGANSTSEAIELTKAAKVIGADACLLVTPYYNRPTQEGLYQHYKLIAETVDIDQILYNVPSRTAVDLCVETVLRLSNIDNIIGIKDATGDLNVAKALIEQCADDFLFYSGDDATAVEFILMGGHGGISVTANITPKQVASAYQFALENDRELAESTNAPLADLHQHLFIESNPIPIKWAMFKMGKCNNGIRLPLMILSQQAQAMLEQDLSNLGII.

T50 provides a ligand contact to pyruvate. The Proton donor/acceptor role is filled by Y138. K166 acts as the Schiff-base intermediate with substrate in catalysis. I208 contributes to the pyruvate binding site.

This sequence belongs to the DapA family. In terms of assembly, homotetramer; dimer of dimers.

The protein localises to the cytoplasm. It catalyses the reaction L-aspartate 4-semialdehyde + pyruvate = (2S,4S)-4-hydroxy-2,3,4,5-tetrahydrodipicolinate + H2O + H(+). The protein operates within amino-acid biosynthesis; L-lysine biosynthesis via DAP pathway; (S)-tetrahydrodipicolinate from L-aspartate: step 3/4. Catalyzes the condensation of (S)-aspartate-beta-semialdehyde [(S)-ASA] and pyruvate to 4-hydroxy-tetrahydrodipicolinate (HTPA). The protein is 4-hydroxy-tetrahydrodipicolinate synthase of Ruthia magnifica subsp. Calyptogena magnifica.